The primary structure comprises 355 residues: Ferrochelatase (355 aa).

2 residues coordinate Fe cation: histidine 214 and glutamate 295.

It belongs to the ferrochelatase family.

It localises to the cytoplasm. It carries out the reaction heme b + 2 H(+) = protoporphyrin IX + Fe(2+). It participates in porphyrin-containing compound metabolism; protoheme biosynthesis; protoheme from protoporphyrin-IX: step 1/1. In terms of biological role, catalyzes the ferrous insertion into protoporphyrin IX. This chain is Ferrochelatase, found in Burkholderia thailandensis (strain ATCC 700388 / DSM 13276 / CCUG 48851 / CIP 106301 / E264).